Reading from the N-terminus, the 449-residue chain is Chromosomal replication initiator protein DnaA (449 aa).

Residues methionine 1–threonine 83 form a domain I, interacts with DnaA modulators region. The disordered stretch occupies residues glutamate 77–leucine 114. Residues threonine 83–serine 112 are domain II. Residues alanine 89 to alanine 99 are compositionally biased toward low complexity. The interval asparagine 113–alanine 329 is domain III, AAA+ region. Positions 157, 159, 160, and 161 each coordinate ATP. The tract at residues glutamine 330–threonine 449 is domain IV, binds dsDNA.

The protein belongs to the DnaA family. Oligomerizes as a right-handed, spiral filament on DNA at oriC.

The protein localises to the cytoplasm. Plays an essential role in the initiation and regulation of chromosomal replication. ATP-DnaA binds to the origin of replication (oriC) to initiate formation of the DNA replication initiation complex once per cell cycle. Binds the DnaA box (a 9 base pair repeat at the origin) and separates the double-stranded (ds)DNA. Forms a right-handed helical filament on oriC DNA; dsDNA binds to the exterior of the filament while single-stranded (ss)DNA is stabiized in the filament's interior. The ATP-DnaA-oriC complex binds and stabilizes one strand of the AT-rich DNA unwinding element (DUE), permitting loading of DNA polymerase. After initiation quickly degrades to an ADP-DnaA complex that is not apt for DNA replication. Binds acidic phospholipids. The chain is Chromosomal replication initiator protein DnaA from Halorhodospira halophila (strain DSM 244 / SL1) (Ectothiorhodospira halophila (strain DSM 244 / SL1)).